The following is a 178-amino-acid chain: Co-chaperone protein p23-1 (178 aa).

The 90-residue stretch at 2–91 (SRHPTVKWAQ…AESKWWNRLT (90 aa)) folds into the CS domain. 2 stretches are compositionally biased toward acidic residues: residues 112 to 126 (DDED…DFGD) and 136 to 155 (DTDE…EGET). The segment at 112–178 (DDEDKGGEGD…DEEGVNAKKD (67 aa)) is disordered. Residues 157 to 178 (AETKEKKIDGEKDEEGVNAKKD) are compositionally biased toward basic and acidic residues.

It belongs to the p23/wos2 family. Interacts with HSP90 in an ATP-dependent manner.

Its function is as follows. Acts as a co-chaperone for HSP90. This chain is Co-chaperone protein p23-1, found in Brassica napus (Rape).